The following is a 787-amino-acid chain: Patatin-like phospholipase domain-containing protein OOU_Y34scaffold00095g16.3 (787 aa).

2 disordered regions span residues 47–69 (APDT…ARSF) and 137–164 (KVVG…PGRR). Over residues 59–69 (ASPRSPSARSF) the composition is skewed to low complexity. The segment covering 144-157 (HRQKKSSRRRKRSK) has biased composition (basic residues). The helical transmembrane segment at 180 to 200 (WPFLLIVGAWIVGLAVTYLFT) threads the bilayer. The 192-residue stretch at 375–566 (LCLSGGASFA…RTDIPIRALN (192 aa)) folds into the PNPLA domain. The GXSXG motif lies at 406 to 410 (GTSGG). Residue S408 is the Nucleophile of the active site. D553 serves as the catalytic Proton acceptor. The disordered stretch occupies residues 745 to 787 (GTDEEITTNDEMEFASDEKAVLTEDEGQFDGVTDNTEGSPLLK). A compositionally biased stretch (acidic residues) spans 746–759 (TDEEITTNDEMEFA). A compositionally biased stretch (polar residues) spans 777 to 787 (TDNTEGSPLLK).

Belongs to the PLPL family.

Its subcellular location is the membrane. Its function is as follows. Probable lipid hydrolase. This chain is Patatin-like phospholipase domain-containing protein OOU_Y34scaffold00095g16.3, found in Pyricularia oryzae (strain Y34) (Rice blast fungus).